The sequence spans 609 residues: mRNA-decapping enzyme 1B (609 aa).

A2 bears the N-acetylalanine mark. Phosphoserine is present on S147. The residue at position 191 (Y191) is a Phosphotyrosine. Disordered regions lie at residues 201–222 (PVKP…LDPE) and 243–264 (TVEP…LPIR). Positions 205–219 (SENQQQRIPQPNQTL) are enriched in polar residues. A phosphoserine mark is found at S272 and S333. 2 disordered regions span residues 326–345 (TGPV…GVQN) and 359–438 (TPGA…SSGV). Positions 336-345 (NIGTSRGVQN) are enriched in polar residues. The span at 368 to 378 (PSTPAPASSAA) shows a compositional bias: low complexity. T389 bears the Phosphothreonine mark. The segment covering 418-438 (QSTLPRQTLPISGNQTGSSGV) has biased composition (polar residues). Residues S440 and S503 each carry the phosphoserine modification.

Belongs to the DCP1 family. Interacts with DCP1A.

It is found in the cytoplasm. The protein localises to the nucleus. The catalysed reaction is a 5'-end (N(7)-methyl 5'-triphosphoguanosine)-ribonucleoside in mRNA + H2O = N(7)-methyl-GDP + a 5'-end phospho-ribonucleoside in mRNA + 2 H(+). May play a role in the degradation of mRNAs, both in normal mRNA turnover and in nonsense-mediated mRNA decay. May remove the 7-methyl guanine cap structure from mRNA molecules, yielding a 5'-phosphorylated mRNA fragment and 7m-GDP. The protein is mRNA-decapping enzyme 1B (DCP1B) of Pongo abelii (Sumatran orangutan).